We begin with the raw amino-acid sequence, 418 residues long: Putative ion-transport protein YfeO (418 aa).

12 helical membrane-spanning segments follow: residues 10–30 (LLLS…LIMV), 54–74 (DSPL…GLVI), 99–119 (ALPG…SLGP), 120–140 (EHPI…RLLP), 149–169 (ILAS…AALI), 186–206 (LFAP…FFHP), 223–243 (ILSG…AVWC), 258–278 (VFVL…GGPV), 300–320 (DYFL…ASGF), 322–342 (GGRI…LHEH), 343–363 (VPAV…VLVV), and 371–391 (LFMA…CIVM).

The protein belongs to the chloride channel (TC 2.A.49) family.

The protein localises to the cell membrane. This chain is Putative ion-transport protein YfeO, found in Escherichia coli O127:H6 (strain E2348/69 / EPEC).